The primary structure comprises 415 residues: Hepatocyte nuclear factor 3-beta (415 aa).

Residues 150-244 (KPPYSYISLI…ENGCYLRRQK (95 aa)) constitute a DNA-binding region (fork-head). The span at 251-262 (KMSMKEPGRKGG) shows a compositional bias: basic and acidic residues. The segment at 251-324 (KMSMKEPGRK…GQHLMSQHHS (74 aa)) is disordered. Residues 266–277 (SANSSSDSCNGN) show a composition bias toward low complexity. The span at 310 to 323 (SPVSQGQHLMSQHH) shows a compositional bias: polar residues.

The protein resides in the nucleus. In terms of biological role, transcription activator for a number of liver genes. Interacts with the cis-acting regulatory regions of these genes. The sequence is that of Hepatocyte nuclear factor 3-beta (foxa2) from Oryzias latipes (Japanese rice fish).